The chain runs to 960 residues: UvrABC system protein A (960 aa).

35 to 42 (GLSGSGKS) contacts ATP. The segment at 270–297 (CAHCNVSVPELQPRLFSFNAPFGACPSC) adopts a C4-type zinc-finger fold. 2 ABC transporter domains span residues 327–605 (FKPE…QASL) and 625–953 (GNGN…WYIK). Residue 657 to 664 (GVSGSGKS) coordinates ATP. Residues 756 to 782 (CEHCKGDGVITIEMNFLPDVYITCDVC) form a C4-type zinc finger.

Belongs to the ABC transporter superfamily. UvrA family. As to quaternary structure, forms a heterotetramer with UvrB during the search for lesions.

It is found in the cytoplasm. In terms of biological role, the UvrABC repair system catalyzes the recognition and processing of DNA lesions. UvrA is an ATPase and a DNA-binding protein. A damage recognition complex composed of 2 UvrA and 2 UvrB subunits scans DNA for abnormalities. When the presence of a lesion has been verified by UvrB, the UvrA molecules dissociate. In Treponema pallidum (strain Nichols), this protein is UvrABC system protein A.